A 657-amino-acid chain; its full sequence is Glycogen debranching enzyme (657 aa).

The Nucleophile role is filled by Asp336. Residue Glu371 is the Proton donor of the active site. A compositionally biased stretch (basic and acidic residues) spans 458-467 (NEANGEENRD). Positions 458–479 (NEANGEENRDGTNNNYSNNHGK) are disordered.

Belongs to the glycosyl hydrolase 13 family.

The enzyme catalyses Hydrolysis of (1-&gt;6)-alpha-D-glucosidic linkages to branches with degrees of polymerization of three or four glucose residues in limit dextrin.. Its pathway is glycan degradation; glycogen degradation. Its function is as follows. Removes maltotriose and maltotetraose chains that are attached by 1,6-alpha-linkage to the limit dextrin main chain, generating a debranched limit dextrin. The protein is Glycogen debranching enzyme of Escherichia coli (strain K12 / DH10B).